We begin with the raw amino-acid sequence, 344 residues long: Galactinol synthase 1 (344 aa).

K111 is an active-site residue. Mn(2+)-binding residues include D127, D129, and H265.

The protein belongs to the glycosyltransferase 8 family. Galactosyltransferase subfamily. A divalent metal cation is required as a cofactor. In terms of tissue distribution, accumulates in mature seeds. Expressed in seedlings (axes and cotyledons), meristems, vascular tissues and emerging lateral roots. Present in abscission zones.

The protein localises to the cytoplasm. It carries out the reaction myo-inositol + UDP-alpha-D-galactose = alpha-D-galactosyl-(1-&gt;3)-1D-myo-inositol + UDP + H(+). Functionally, galactinol synthase involved in the biosynthesis of raffinose family oligosaccharides (RFOs) that function as osmoprotectants. Promotes plant stress tolerance such as heat, chilling, salinity and methylviologen (MV), a superoxide radical generating drug, by mediating raffinose accumulation, an osmoprotective substance. This Arabidopsis thaliana (Mouse-ear cress) protein is Galactinol synthase 1 (GOLS1).